Here is a 299-residue protein sequence, read N- to C-terminus: Pyridoxal 5'-phosphate synthase subunit PdxS (299 aa).

Asp24 is a binding site for D-ribose 5-phosphate. Catalysis depends on Lys81, which acts as the Schiff-base intermediate with D-ribose 5-phosphate. Gly153 serves as a coordination point for D-ribose 5-phosphate. D-glyceraldehyde 3-phosphate is bound at residue Arg165. D-ribose 5-phosphate contacts are provided by residues Gly219 and 240–241 (GS).

The protein belongs to the PdxS/SNZ family. As to quaternary structure, in the presence of PdxT, forms a dodecamer of heterodimers.

It catalyses the reaction aldehydo-D-ribose 5-phosphate + D-glyceraldehyde 3-phosphate + L-glutamine = pyridoxal 5'-phosphate + L-glutamate + phosphate + 3 H2O + H(+). It participates in cofactor biosynthesis; pyridoxal 5'-phosphate biosynthesis. Functionally, catalyzes the formation of pyridoxal 5'-phosphate from ribose 5-phosphate (RBP), glyceraldehyde 3-phosphate (G3P) and ammonia. The ammonia is provided by the PdxT subunit. Can also use ribulose 5-phosphate and dihydroxyacetone phosphate as substrates, resulting from enzyme-catalyzed isomerization of RBP and G3P, respectively. In Methanococcus maripaludis (strain C7 / ATCC BAA-1331), this protein is Pyridoxal 5'-phosphate synthase subunit PdxS.